The chain runs to 303 residues: D-alanyl-D-alanine carboxypeptidase (303 aa).

Residues 7 to 23 (LLLLLFLIYLGYDYVNE) form a helical membrane-spanning segment. The segment at 37–56 (DQNPKEHLENSGTSENTQEK) is disordered. Substrate-binding positions include 154 to 156 (YAL) and S161. Zn(2+)-binding residues include H163 and D170. The Proton donor/acceptor role is filled by E213. A Zn(2+)-binding site is contributed by H216.

This sequence belongs to the peptidase M15B family. Requires Zn(2+) as cofactor.

The protein resides in the cell membrane. With respect to regulation, the DD-carboxypeptidase activity is not inhibited by beta-lactam antibiotics. Functionally, cleaves the C-terminal D-alanine residue of UDP-muramyl-pentapeptide (UDP-MurNAc-L-Ala-D-Glu-mDAP-D-Ala-D-Ala) or diacetyl-L-Lys-D-Ala-D-Ala. However the physiological substrate likely contains L-Lys instead of mDAP at the third position of the pentapeptide. Also releases the C-terminal D-lactate from UDP-MurNAc-L-Ala-D-Glu-mDAP-D-Ala-D-lactate, a depsipeptide produced by the vancomycin resistance protein VanA. Therefore, VanY should contribute in vivo to the hydrolysis of both the D-alanyl-D-alanine- and the depsipeptide-containing peptidoglycan precursors. Is not necessary for vancomycin resistance of E.faecium BM4147 and perhaps not W14-9. Does not display transpeptidase or beta-lactamase activities. The chain is D-alanyl-D-alanine carboxypeptidase from Enterococcus faecium (Streptococcus faecium).